Consider the following 417-residue polypeptide: Phosphoribosylamine--glycine ligase (417 aa).

Positions 107–313 (KQIMAKYEIP…FLEIIEATLE (207 aa)) constitute an ATP-grasp domain. Residue 133 to 194 (LKETWYPVVI…EEMLYGKEAS (62 aa)) coordinates ATP. Mg(2+)-binding residues include E283 and N285.

Belongs to the GARS family. Requires Mg(2+) as cofactor. Mn(2+) serves as cofactor.

The catalysed reaction is 5-phospho-beta-D-ribosylamine + glycine + ATP = N(1)-(5-phospho-beta-D-ribosyl)glycinamide + ADP + phosphate + H(+). The protein operates within purine metabolism; IMP biosynthesis via de novo pathway; N(1)-(5-phospho-D-ribosyl)glycinamide from 5-phospho-alpha-D-ribose 1-diphosphate: step 2/2. The chain is Phosphoribosylamine--glycine ligase from Caldanaerobacter subterraneus subsp. tengcongensis (strain DSM 15242 / JCM 11007 / NBRC 100824 / MB4) (Thermoanaerobacter tengcongensis).